We begin with the raw amino-acid sequence, 176 residues long: Ribosome maturation factor RimM (176 aa).

One can recognise a PRC barrel domain in the interval 99–174; the sequence is KDEFYVRDLI…IVLIQPELWN (76 aa).

The protein belongs to the RimM family. In terms of assembly, binds ribosomal protein uS19.

Its subcellular location is the cytoplasm. Its function is as follows. An accessory protein needed during the final step in the assembly of 30S ribosomal subunit, possibly for assembly of the head region. Essential for efficient processing of 16S rRNA. May be needed both before and after RbfA during the maturation of 16S rRNA. It has affinity for free ribosomal 30S subunits but not for 70S ribosomes. The protein is Ribosome maturation factor RimM of Leptospira borgpetersenii serovar Hardjo-bovis (strain JB197).